Reading from the N-terminus, the 527-residue chain is Glutamate--cysteine ligase (527 aa).

It belongs to the glutamate--cysteine ligase type 1 family. Type 1 subfamily.

The enzyme catalyses L-cysteine + L-glutamate + ATP = gamma-L-glutamyl-L-cysteine + ADP + phosphate + H(+). The protein operates within sulfur metabolism; glutathione biosynthesis; glutathione from L-cysteine and L-glutamate: step 1/2. In Pseudomonas aeruginosa (strain LESB58), this protein is Glutamate--cysteine ligase.